Reading from the N-terminus, the 123-residue chain is Small ribosomal subunit protein uS13c (123 aa).

The disordered stretch occupies residues 89–123 (RGKRHRNNLPVRGQRTRTNARSRRGSKKTVTGKKK). Basic residues predominate over residues 102-123 (QRTRTNARSRRGSKKTVTGKKK).

This sequence belongs to the universal ribosomal protein uS13 family. In terms of assembly, part of the 30S ribosomal subunit.

The protein resides in the plastid. It localises to the chloroplast. Functionally, located at the top of the head of the 30S subunit, it contacts several helices of the 16S rRNA. In Phaeodactylum tricornutum (strain CCAP 1055/1), this protein is Small ribosomal subunit protein uS13c.